The following is an 88-amino-acid chain: Protein U62 (88 aa).

This is Protein U62 from Elephantid herpesvirus 1 (isolate Asian elephant/Berlin/Kiba/1998) (EIHV-1).